Here is a 522-residue protein sequence, read N- to C-terminus: Chromosomal replication initiator protein DnaA (522 aa).

The domain I, interacts with DnaA modulators stretch occupies residues Met-1–Met-71. The interval Met-71–Ser-185 is domain II. The tract at residues Arg-186–Ser-402 is domain III, AAA+ region. ATP is bound by residues Gly-230, Gly-232, Lys-233, and Thr-234. The domain IV, binds dsDNA stretch occupies residues Asn-403–Gly-522.

It belongs to the DnaA family. In terms of assembly, oligomerizes as a right-handed, spiral filament on DNA at oriC.

It localises to the cytoplasm. Its function is as follows. Plays an essential role in the initiation and regulation of chromosomal replication. ATP-DnaA binds to the origin of replication (oriC) to initiate formation of the DNA replication initiation complex once per cell cycle. Binds the DnaA box (a 9 base pair repeat at the origin) and separates the double-stranded (ds)DNA. Forms a right-handed helical filament on oriC DNA; dsDNA binds to the exterior of the filament while single-stranded (ss)DNA is stabiized in the filament's interior. The ATP-DnaA-oriC complex binds and stabilizes one strand of the AT-rich DNA unwinding element (DUE), permitting loading of DNA polymerase. After initiation quickly degrades to an ADP-DnaA complex that is not apt for DNA replication. Binds acidic phospholipids. The protein is Chromosomal replication initiator protein DnaA of Ralstonia nicotianae (strain ATCC BAA-1114 / GMI1000) (Ralstonia solanacearum).